Here is a 245-residue protein sequence, read N- to C-terminus: 6-carboxyhexanoate--CoA ligase (245 aa).

Belongs to the BioW family. Homodimer. Mg(2+) serves as cofactor.

It carries out the reaction heptanedioate + ATP + CoA = 6-carboxyhexanoyl-CoA + AMP + diphosphate. It functions in the pathway metabolic intermediate metabolism; pimeloyl-CoA biosynthesis; pimeloyl-CoA from pimelate: step 1/1. Catalyzes the transformation of pimelate into pimeloyl-CoA with concomitant hydrolysis of ATP to AMP. The sequence is that of 6-carboxyhexanoate--CoA ligase from Thermodesulfovibrio yellowstonii (strain ATCC 51303 / DSM 11347 / YP87).